A 469-amino-acid polypeptide reads, in one-letter code: Serine hydroxymethyltransferase, cytosolic (469 aa).

Lysine 248 is modified (N6-(pyridoxal phosphate)lysine).

The protein belongs to the SHMT family. In terms of assembly, homotetramer. Requires pyridoxal 5'-phosphate as cofactor.

It is found in the cytoplasm. It carries out the reaction (6R)-5,10-methylene-5,6,7,8-tetrahydrofolate + glycine + H2O = (6S)-5,6,7,8-tetrahydrofolate + L-serine. Its pathway is one-carbon metabolism; tetrahydrofolate interconversion. Interconversion of serine and glycine. The polypeptide is Serine hydroxymethyltransferase, cytosolic (SHM2) (Candida glabrata (strain ATCC 2001 / BCRC 20586 / JCM 3761 / NBRC 0622 / NRRL Y-65 / CBS 138) (Yeast)).